The chain runs to 299 residues: NADH-cytochrome b5 reductase 2 (299 aa).

Residues 13-35 form a helical membrane-spanning segment; it reads SFKVLAPFAAAVGSVGIAYQYST. The FAD-binding FR-type domain maps to 50–154; the sequence is DEWIDLKLAK…KGPVVKWKWE (105 aa). Residue 157 to 192 participates in FAD binding; that stretch reads QYKSIALIGGGTGITPLYQLMHEITKNPEDKTKVNL.

The protein belongs to the flavoprotein pyridine nucleotide cytochrome reductase family. The cofactor is FAD.

The protein resides in the mitochondrion outer membrane. It carries out the reaction 2 Fe(III)-[cytochrome b5] + NADH = 2 Fe(II)-[cytochrome b5] + NAD(+) + H(+). Functionally, may mediate the reduction of outer membrane cytochrome b5. This is NADH-cytochrome b5 reductase 2 (MCR1) from Debaryomyces hansenii (strain ATCC 36239 / CBS 767 / BCRC 21394 / JCM 1990 / NBRC 0083 / IGC 2968) (Yeast).